The chain runs to 303 residues: Nucleotide-binding protein Acry_0446 (303 aa).

10–17 is a binding site for ATP; the sequence is GLSGAGRN. Residue 54–57 participates in GTP binding; that stretch reads DART.

Belongs to the RapZ-like family.

Its function is as follows. Displays ATPase and GTPase activities. This chain is Nucleotide-binding protein Acry_0446, found in Acidiphilium cryptum (strain JF-5).